The sequence spans 58 residues: Small ribosomal subunit protein bS21 (58 aa).

The disordered stretch occupies residues 36 to 58 (RHHETPVEKYKRKLQQRRRSRRR). Positions 45 to 58 (YKRKLQQRRRSRRR) are enriched in basic residues.

Belongs to the bacterial ribosomal protein bS21 family.

In Prochlorococcus marinus (strain NATL1A), this protein is Small ribosomal subunit protein bS21.